We begin with the raw amino-acid sequence, 414 residues long: Putative transporter AmpG 4 (414 aa).

The next 12 helical transmembrane spans lie at Ile-15 to Val-35, Ile-44 to Trp-63, Trp-84 to Pro-104, Thr-109 to Val-129, Val-150 to Ile-170, Leu-177 to Asn-197, Phe-230 to Ala-250, Ile-268 to Val-288, Phe-295 to Leu-315, Ala-324 to Val-344, Tyr-360 to Gly-379, and Gly-389 to Asn-409.

It belongs to the major facilitator superfamily.

It is found in the cell inner membrane. This chain is Putative transporter AmpG 4 (ampG4), found in Rickettsia conorii (strain ATCC VR-613 / Malish 7).